Here is a 152-residue protein sequence, read N- to C-terminus: Ribosome maturation factor RimP (152 aa).

This sequence belongs to the RimP family.

The protein localises to the cytoplasm. Functionally, required for maturation of 30S ribosomal subunits. The protein is Ribosome maturation factor RimP of Serratia proteamaculans (strain 568).